The following is a 363-amino-acid chain: Putative C-&gt;U-editing enzyme APOBEC-4 (363 aa).

Residues 61 to 177 (PQTKHLTFYE…AWNREALRSL (117 aa)) form the CMP/dCMP-type deaminase domain. H93 lines the Zn(2+) pocket. Catalysis depends on E95, which acts as the Proton donor. Residues C127 and C134 each contribute to the Zn(2+) site.

It belongs to the cytidine and deoxycytidylate deaminase family. It depends on Zn(2+) as a cofactor.

Its function is as follows. Putative C to U editing enzyme whose physiological substrate is not yet known. The chain is Putative C-&gt;U-editing enzyme APOBEC-4 (APOBEC4) from Macaca fascicularis (Crab-eating macaque).